The primary structure comprises 543 residues: Probable protein kinase UbiB (543 aa).

Residues 123–500 (DFDQQPLASA…HRRHAQARFL (378 aa)) enclose the Protein kinase domain. ATP is bound by residues 129-137 (LASASVAQV) and lysine 152. Aspartate 286 serves as the catalytic Proton acceptor. Helical transmembrane passes span 499 to 519 (FLLGAGATLLLGSILLLPTHE) and 521 to 541 (LASAGLTISIICWLNGWWKIS).

Belongs to the ABC1 family. UbiB subfamily.

Its subcellular location is the cell inner membrane. Its pathway is cofactor biosynthesis; ubiquinone biosynthesis [regulation]. Is probably a protein kinase regulator of UbiI activity which is involved in aerobic coenzyme Q (ubiquinone) biosynthesis. This chain is Probable protein kinase UbiB, found in Tolumonas auensis (strain DSM 9187 / NBRC 110442 / TA 4).